Consider the following 421-residue polypeptide: Leucine-rich repeat-containing protein 42 (421 aa).

LRR repeat units follow at residues 149–170 (VLCS…EEIK), 174–195 (ELTR…LEHL), 202–222 (SVTQ…RKMT), 234–255 (NLTL…GYLF), and 259–280 (KLNC…KDKL). The interval 374–406 (HEPLLSQESKKSKKRAFEESEQEQSSPQSAKQK) is disordered. Ser-399 carries the phosphoserine modification.

This sequence belongs to the LRRC42 family.

The chain is Leucine-rich repeat-containing protein 42 (Lrrc42) from Rattus norvegicus (Rat).